A 132-amino-acid polypeptide reads, in one-letter code: NADH-quinone oxidoreductase subunit A (132 aa).

The next 3 helical transmembrane spans lie at F14–I34, F66–W86, and I96–I116.

Belongs to the complex I subunit 3 family. NDH-1 is composed of 13 different subunits. Subunits NuoA, H, J, K, L, M, N constitute the membrane sector of the complex.

The protein localises to the cell membrane. It carries out the reaction a quinone + NADH + 5 H(+)(in) = a quinol + NAD(+) + 4 H(+)(out). Functionally, NDH-1 shuttles electrons from NADH, via FMN and iron-sulfur (Fe-S) centers, to quinones in the respiratory chain. The immediate electron acceptor for the enzyme in this species is believed to be ubiquinone. Couples the redox reaction to proton translocation (for every two electrons transferred, four hydrogen ions are translocated across the cytoplasmic membrane), and thus conserves the redox energy in a proton gradient. This chain is NADH-quinone oxidoreductase subunit A, found in Buchnera aphidicola subsp. Baizongia pistaciae (strain Bp).